Reading from the N-terminus, the 119-residue chain is Large ribosomal subunit protein uL18 (119 aa).

Belongs to the universal ribosomal protein uL18 family. As to quaternary structure, part of the 50S ribosomal subunit; part of the 5S rRNA/L5/L18/L25 subcomplex. Contacts the 5S and 23S rRNAs.

Functionally, this is one of the proteins that bind and probably mediate the attachment of the 5S RNA into the large ribosomal subunit, where it forms part of the central protuberance. The chain is Large ribosomal subunit protein uL18 from Mesorhizobium japonicum (strain LMG 29417 / CECT 9101 / MAFF 303099) (Mesorhizobium loti (strain MAFF 303099)).